The following is a 122-amino-acid chain: LOB domain-containing protein 5 (122 aa).

The region spanning 8 to 109 is the LOB domain; that stretch reads RPCSVCITKN…AYLRELQEKI (102 aa).

It belongs to the LOB domain-containing protein family.

The protein is LOB domain-containing protein 5 (LBD5) of Arabidopsis thaliana (Mouse-ear cress).